The following is a 350-amino-acid chain: Ribonuclease H2 subunit B (350 aa).

Residues 134 to 151 (QDYSNSSDTGENQKSNSK) are compositionally biased toward polar residues. Residues 134-153 (QDYSNSSDTGENQKSNSKTN) are disordered.

The protein belongs to the RNase H2 subunit B family. Highly divergent. In terms of assembly, the RNase 2 complex is a heterotrimer composed of the catalytic subunit RNH201 and of the non-catalytic subunits RNH202 and RNH203.

It localises to the nucleus. In terms of biological role, non catalytic subunit of RNase H2, an endonuclease that specifically degrades the RNA of RNA:DNA hybrids. Participates in DNA replication, possibly by mediating the removal of lagging-strand Okazaki fragment RNA primers during DNA replication. Mediates the excision of single ribonucleotides from DNA:RNA duplexes. The protein is Ribonuclease H2 subunit B (RNH202) of Saccharomyces cerevisiae (strain ATCC 204508 / S288c) (Baker's yeast).